Reading from the N-terminus, the 349-residue chain is tRNA pseudouridine synthase D (349 aa).

Residue Phe27 participates in substrate binding. Catalysis depends on Asp80, which acts as the Nucleophile. Asn129 is a substrate binding site. The TRUD domain maps to 155 to 303 (GVPNYFGAQR…VEAARRAMLL (149 aa)). Residue Phe329 coordinates substrate.

It belongs to the pseudouridine synthase TruD family.

It carries out the reaction uridine(13) in tRNA = pseudouridine(13) in tRNA. Its function is as follows. Responsible for synthesis of pseudouridine from uracil-13 in transfer RNAs. The chain is tRNA pseudouridine synthase D from Escherichia coli (strain 55989 / EAEC).